Consider the following 580-residue polypeptide: Microcin-J25 export ATP-binding/permease protein McjD (580 aa).

The next 6 helical transmembrane spans lie at 25-45 (FFSMLFITSLSSIIISISPLI), 66-86 (VLLACLYMFCVISNKASVFLF), 143-163 (VSQNILSPVIQLISTIVVVLS), 167-187 (WFSAGVFFLYILVFVIFNTRL), 261-281 (AVILFGSVFIYNILGVLNGVV), and 286-306 (FIMITSYIILLSTPVENIGAL). An ABC transmembrane type-1 domain is found at 25–312 (FFSMLFITSL…IGALLSEIRQ (288 aa)). The 234-residue stretch at 345 to 578 (LSIRELSFSY…NEYISGLASV (234 aa)) folds into the ABC transporter domain. ATP is bound at residue 378-385 (GPSGSGKS).

The protein belongs to the ABC transporter superfamily. Homodimer.

Its subcellular location is the cell inner membrane. Functionally, is able to protect a cell, which harbors the plasmid pTUC100 encoding microcin J25, against microcin J25. Is required for microcin J25 export out of the producing cells. The protein is Microcin-J25 export ATP-binding/permease protein McjD (mcjD) of Escherichia coli.